A 93-amino-acid chain; its full sequence is Small ribosomal subunit protein uS19 (93 aa).

Belongs to the universal ribosomal protein uS19 family.

Its function is as follows. Protein S19 forms a complex with S13 that binds strongly to the 16S ribosomal RNA. This is Small ribosomal subunit protein uS19 from Geotalea daltonii (strain DSM 22248 / JCM 15807 / FRC-32) (Geobacter daltonii).